Consider the following 817-residue polypeptide: Alpha-bisabolene synthase (817 aa).

Aspartate 566, aspartate 570, aspartate 713, threonine 717, and glutamate 721 together coordinate Mg(2+). Positions 566–570 (DDMYD) match the DDXXD motif motif.

The protein belongs to the terpene synthase family. Tpsd subfamily. It depends on Mg(2+) as a cofactor. The cofactor is Mn(2+). Requires K(+) as cofactor.

The protein resides in the cytoplasm. The enzyme catalyses (2E,6E)-farnesyl diphosphate = (E,R)-alpha-bisabolene + diphosphate. It participates in terpene metabolism; oleoresin biosynthesis. Functionally, converts farnesyl diphosphate to alpha-bisabolene. Involved in defensive oleoresin formation in conifers in response to insect attack or other injury. Involved in sesquiterpene (C15) olefins biosynthesis. The protein is Alpha-bisabolene synthase (ag1) of Abies grandis (Grand fir).